The chain runs to 196 residues: Small ribosomal subunit protein uS4c (196 aa).

Residues 17 to 36 are disordered; that stretch reads ALPGLTRKTPKSGSNLKKKF. An S4 RNA-binding domain is found at 89 to 169; sequence MRLDNILFRL…LPKHLTIDTL (81 aa).

This sequence belongs to the universal ribosomal protein uS4 family. As to quaternary structure, part of the 30S ribosomal subunit. Contacts protein S5. The interaction surface between S4 and S5 is involved in control of translational fidelity.

It localises to the plastid. Its subcellular location is the chloroplast. Functionally, one of the primary rRNA binding proteins, it binds directly to 16S rRNA where it nucleates assembly of the body of the 30S subunit. With S5 and S12 plays an important role in translational accuracy. The sequence is that of Small ribosomal subunit protein uS4c (rps4) from Festuca gigantea (Giant fescue).